We begin with the raw amino-acid sequence, 185 residues long: Protein GrpE (185 aa).

Residues 1 to 40 form a disordered region; that stretch reads MSEEKKDEILEQETVETKEEIKTEEAEQKTESLEEKVARL.

The protein belongs to the GrpE family. As to quaternary structure, homodimer.

Its subcellular location is the cytoplasm. Its function is as follows. Participates actively in the response to hyperosmotic and heat shock by preventing the aggregation of stress-denatured proteins, in association with DnaK and GrpE. It is the nucleotide exchange factor for DnaK and may function as a thermosensor. Unfolded proteins bind initially to DnaJ; upon interaction with the DnaJ-bound protein, DnaK hydrolyzes its bound ATP, resulting in the formation of a stable complex. GrpE releases ADP from DnaK; ATP binding to DnaK triggers the release of the substrate protein, thus completing the reaction cycle. Several rounds of ATP-dependent interactions between DnaJ, DnaK and GrpE are required for fully efficient folding. This chain is Protein GrpE, found in Aliarcobacter butzleri (strain RM4018) (Arcobacter butzleri).